The following is a 477-amino-acid chain: Bifunctional protein HldE (477 aa).

The ribokinase stretch occupies residues 1 to 319 (MTPPLPGFRD…AALGGGPAPA (319 aa)). Residue 195-198 (NLAE) coordinates ATP. Asp264 is a catalytic residue. Residues 346–477 (MTNGCFDLLH…DLIARIRSRG (132 aa)) are cytidylyltransferase.

The protein in the N-terminal section; belongs to the carbohydrate kinase PfkB family. It in the C-terminal section; belongs to the cytidylyltransferase family. Homodimer.

It carries out the reaction D-glycero-beta-D-manno-heptose 7-phosphate + ATP = D-glycero-beta-D-manno-heptose 1,7-bisphosphate + ADP + H(+). The enzyme catalyses D-glycero-beta-D-manno-heptose 1-phosphate + ATP + H(+) = ADP-D-glycero-beta-D-manno-heptose + diphosphate. It participates in nucleotide-sugar biosynthesis; ADP-L-glycero-beta-D-manno-heptose biosynthesis; ADP-L-glycero-beta-D-manno-heptose from D-glycero-beta-D-manno-heptose 7-phosphate: step 1/4. Its pathway is nucleotide-sugar biosynthesis; ADP-L-glycero-beta-D-manno-heptose biosynthesis; ADP-L-glycero-beta-D-manno-heptose from D-glycero-beta-D-manno-heptose 7-phosphate: step 3/4. Its function is as follows. Catalyzes the phosphorylation of D-glycero-D-manno-heptose 7-phosphate at the C-1 position to selectively form D-glycero-beta-D-manno-heptose-1,7-bisphosphate. In terms of biological role, catalyzes the ADP transfer from ATP to D-glycero-beta-D-manno-heptose 1-phosphate, yielding ADP-D-glycero-beta-D-manno-heptose. This is Bifunctional protein HldE from Halorhodospira halophila (strain DSM 244 / SL1) (Ectothiorhodospira halophila (strain DSM 244 / SL1)).